Consider the following 89-residue polypeptide: Mitochondrial import inner membrane translocase subunit Tim9 (89 aa).

Alanine 2 is subject to N-acetylalanine. Residues cysteine 28–cysteine 52 carry the Twin CX3C motif motif. Cystine bridges form between cysteine 28/cysteine 52 and cysteine 32/cysteine 48.

Belongs to the small Tim family. In terms of assembly, heterohexamer; composed of 3 copies of TIMM9 and 3 copies of TIMM10/TIM10A, named soluble 70 kDa complex. The complex forms a 6-bladed alpha-propeller structure and associates with the TIMM22 component of the TIM22 complex. Interacts with multi-pass transmembrane proteins in transit. Also forms a complex composed of TIMM9, TIMM10/TIM10A and FXC1/TIM10B. Ubiquitous, with highest expression in heart, kidney, liver and skeletal muscle.

It localises to the mitochondrion inner membrane. Its function is as follows. Mitochondrial intermembrane chaperone that participates in the import and insertion of multi-pass transmembrane proteins into the mitochondrial inner membrane. May also be required for the transfer of beta-barrel precursors from the TOM complex to the sorting and assembly machinery (SAM complex) of the outer membrane. Acts as a chaperone-like protein that protects the hydrophobic precursors from aggregation and guide them through the mitochondrial intermembrane space. The protein is Mitochondrial import inner membrane translocase subunit Tim9 (TIMM9) of Homo sapiens (Human).